Here is a 557-residue protein sequence, read N- to C-terminus: Hyaluronan synthase 3 (557 aa).

Over Met-1–Arg-10 the chain is Cytoplasmic. The chain crosses the membrane as a helical span at residues Val-11–Thr-31. The Extracellular portion of the chain corresponds to Gly-32–Ser-44. A helical transmembrane segment spans residues Phe-45–Leu-65. Topologically, residues Glu-66 to Leu-367 are cytoplasmic. The helical transmembrane segment at Trp-368–Val-388 threads the bilayer. The Extracellular segment spans residues Gln-389–Asn-398. The helical transmembrane segment at Ile-399–Ile-419 threads the bilayer. The Cytoplasmic portion of the chain corresponds to Leu-420 to Ser-430. A helical transmembrane segment spans residues Leu-431 to Ile-451. Residues Lys-452 to Lys-463 lie on the Extracellular side of the membrane. The chain crosses the membrane as a helical span at residues Leu-464–Gly-484. Residues Leu-485–Glu-501 lie on the Cytoplasmic side of the membrane. Residues Leu-502–Leu-522 form a helical membrane-spanning segment. The Extracellular segment spans residues Tyr-523–Pro-557.

Belongs to the NodC/HAS family. Requires Mg(2+) as cofactor. In terms of processing, O-GlcNAcylation increases the hyaluronan synthase activity, HAS3 stability and its plasma membrane residence. The concentration of UDP-GlcNAc controls the level of O-GlcNAc modification.

Its subcellular location is the cell membrane. It is found in the golgi apparatus membrane. The protein localises to the golgi apparatus. The protein resides in the trans-Golgi network membrane. It localises to the cytoplasmic vesicle. It carries out the reaction [hyaluronan](n) + UDP-N-acetyl-alpha-D-glucosamine = N-acetyl-beta-D-glucosaminyl-(1-&gt;4)-[hyaluronan](n) + UDP + H(+). The enzyme catalyses N-acetyl-beta-D-glucosaminyl-(1-&gt;4)-[hyaluronan](n) + UDP-alpha-D-glucuronate = [hyaluronan](n+1) + UDP + H(+). Its pathway is glycan biosynthesis; hyaluronan biosynthesis. Its function is as follows. Catalyzes the addition of GlcNAc or GlcUA monosaccharides to the nascent hyaluronan polymer. Therefore, it is essential to hyaluronan synthesis a major component of most extracellular matrices that has a structural role in tissues architectures and regulates cell adhesion, migration and differentiation. This is one of three isoenzymes responsible for cellular hyaluronan synthesis. This Xenopus laevis (African clawed frog) protein is Hyaluronan synthase 3 (has3).